The following is a 305-amino-acid chain: Aquaporin NIP6-1 (305 aa).

The disordered stretch occupies residues 1 to 30 (MDHEEIPSTPSTPATTPGTPGAPLFGGFEG). Over residues 7–23 (PSTPSTPATTPGTPGAP) the composition is skewed to low complexity. The next 2 helical transmembrane spans lie at 82-102 (LGAE…TAIV) and 111-131 (TLIG…LSTG). An NPA 1 motif is present at residues 139–141 (NPA). Helical transmembrane passes span 159 to 179 (VYIG…KAVF), 194 to 214 (LSQA…VVTA), and 221 to 241 (AVGE…ILIA). An NPA 2 motif is present at residues 250–252 (NPV). Residues 267 to 287 (IWVYLTAPILGALIGAGTYTI) traverse the membrane as a helical segment. A Phosphoserine modification is found at Ser-302.

It belongs to the MIP/aquaporin (TC 1.A.8) family. NIP (TC 1.A.8.12) subfamily. Expressed in roots.

It localises to the membrane. Transports glycerol, urea and formamide, in Xenopus laevis oocytes. Very low water transport activity. This is Aquaporin NIP6-1 (NIP6-1) from Arabidopsis thaliana (Mouse-ear cress).